The chain runs to 90 residues: Putative membrane protein insertion efficiency factor (90 aa).

It belongs to the UPF0161 family.

It is found in the cell membrane. Its function is as follows. Could be involved in insertion of integral membrane proteins into the membrane. The protein is Putative membrane protein insertion efficiency factor of Oceanobacillus iheyensis (strain DSM 14371 / CIP 107618 / JCM 11309 / KCTC 3954 / HTE831).